Here is a 349-residue protein sequence, read N- to C-terminus: Hydroxymethylglutaryl-CoA synthase (349 aa).

2 residues coordinate (3S)-3-hydroxy-3-methylglutaryl-CoA: D30 and A31. The active-site Proton donor/acceptor is the E82. (3S)-3-hydroxy-3-methylglutaryl-CoA-binding residues include C114 and T155. C114 (acyl-thioester intermediate) is an active-site residue. R203 contacts CoA. The (3S)-3-hydroxy-3-methylglutaryl-CoA site is built by T205 and H238. H238 acts as the Proton donor/acceptor in catalysis. K243 contacts CoA. (3S)-3-hydroxy-3-methylglutaryl-CoA-binding residues include N270 and S300.

It belongs to the thiolase-like superfamily. Archaeal HMG-CoA synthase family. As to quaternary structure, interacts with acetoacetyl-CoA thiolase that catalyzes the precedent step in the pathway and with a DUF35 protein. The acetoacetyl-CoA thiolase/HMG-CoA synthase complex channels the intermediate via a fused CoA-binding site, which allows for efficient coupling of the endergonic thiolase reaction with the exergonic HMGCS reaction.

It catalyses the reaction acetoacetyl-CoA + acetyl-CoA + H2O = (3S)-3-hydroxy-3-methylglutaryl-CoA + CoA + H(+). The protein operates within metabolic intermediate biosynthesis; (R)-mevalonate biosynthesis; (R)-mevalonate from acetyl-CoA: step 2/3. In terms of biological role, catalyzes the condensation of acetyl-CoA with acetoacetyl-CoA to form 3-hydroxy-3-methylglutaryl-CoA (HMG-CoA). Functions in the mevalonate (MVA) pathway leading to isopentenyl diphosphate (IPP), a key precursor for the biosynthesis of isoprenoid compounds that are building blocks of archaeal membrane lipids. In Methanococcus vannielii (strain ATCC 35089 / DSM 1224 / JCM 13029 / OCM 148 / SB), this protein is Hydroxymethylglutaryl-CoA synthase.